Reading from the N-terminus, the 2284-residue chain is RNA1 polyprotein (2284 aa).

Topologically, residues 567 to 1172 are cytoplasmic; that stretch reads CTAEEIFRMH…LVENYSLLLT (606 aa). Positions 750–918 constitute an SF3 helicase domain; sequence VSKLEEVHQR…DNTHFTPRAY (169 aa). 780 to 787 provides a ligand contact to ATP; it reads GASQSGKT. The helical transmembrane segment at 1173-1193 threads the bilayer; it reads LVAILVLIATAYSLISTLIGL. At 1194 to 1216 the chain is on the lumenal side; it reads AGCSSFAGGMVALNHVSNASIPC. At Ser-1217 the chain carries O-(5'-phospho-RNA)-serine. The region spanning 1242-1457 is the Peptidase C3 domain; sequence GPAQGQGDHE…SVIPSYSSSF (216 aa). Residues His-1283, Glu-1327, and Cys-1419 each act as for picornain 3C-like protease activity in the active site. The RdRp catalytic domain maps to 1727–1851; the sequence is DVGYNCDYKG…TVSQSIMTSF (125 aa).

This sequence belongs to the nepoviruses RNA1 polyprotein family. Post-translationally, specific enzymatic cleavages by picornain 3C-like protease in vivo yield mature proteins. Picornain 3C-like protease is autocatalytically processed. VPg is uridylylated by the polymerase and is covalently linked to the 5'-end of genomic RNA. This uridylylated form acts as a nucleotide-peptide primer for the polymerase.

The protein resides in the host endoplasmic reticulum lumen. Its subcellular location is the host endoplasmic reticulum membrane. It carries out the reaction RNA(n) + a ribonucleoside 5'-triphosphate = RNA(n+1) + diphosphate. Its function is as follows. Picornain 3C-like protease is a thiol protease that cleaves the P1 and P2 polyproteins. This Vitis vinifera (Grape) protein is RNA1 polyprotein.